The following is a 63-amino-acid chain: Cytochrome c oxidase subunit 7C, mitochondrial (63 aa).

A mitochondrion-targeting transit peptide spans 1–16 (MLGHSIRRFTTSVVRR). Over 17–33 (SHYEEGPGKNLPFSVEN) the chain is Mitochondrial matrix. Lys-25 bears the N6-acetyllysine; alternate mark. Residue Lys-25 is modified to N6-succinyllysine; alternate. A helical transmembrane segment spans residues 34-60 (KWTLLVKMCLFFGSAFSVPFLIVRHQL). Over 61–63 (LKQ) the chain is Mitochondrial intermembrane.

This sequence belongs to the cytochrome c oxidase VIIc family. Component of the cytochrome c oxidase (complex IV, CIV), a multisubunit enzyme composed of 14 subunits. The complex is composed of a catalytic core of 3 subunits MT-CO1, MT-CO2 and MT-CO3, encoded in the mitochondrial DNA, and 11 supernumerary subunits COX4I, COX5A, COX5B, COX6A, COX6B, COX6C, COX7A, COX7B, COX7C, COX8 and NDUFA4, which are encoded in the nuclear genome. The complex exists as a monomer or a dimer and forms supercomplexes (SCs) in the inner mitochondrial membrane with NADH-ubiquinone oxidoreductase (complex I, CI) and ubiquinol-cytochrome c oxidoreductase (cytochrome b-c1 complex, complex III, CIII), resulting in different assemblies (supercomplex SCI(1)III(2)IV(1) and megacomplex MCI(2)III(2)IV(2)). Interacts with RAB5IF.

The protein resides in the mitochondrion inner membrane. The protein operates within energy metabolism; oxidative phosphorylation. Functionally, component of the cytochrome c oxidase, the last enzyme in the mitochondrial electron transport chain which drives oxidative phosphorylation. The respiratory chain contains 3 multisubunit complexes succinate dehydrogenase (complex II, CII), ubiquinol-cytochrome c oxidoreductase (cytochrome b-c1 complex, complex III, CIII) and cytochrome c oxidase (complex IV, CIV), that cooperate to transfer electrons derived from NADH and succinate to molecular oxygen, creating an electrochemical gradient over the inner membrane that drives transmembrane transport and the ATP synthase. Cytochrome c oxidase is the component of the respiratory chain that catalyzes the reduction of oxygen to water. Electrons originating from reduced cytochrome c in the intermembrane space (IMS) are transferred via the dinuclear copper A center (CU(A)) of subunit 2 and heme A of subunit 1 to the active site in subunit 1, a binuclear center (BNC) formed by heme A3 and copper B (CU(B)). The BNC reduces molecular oxygen to 2 water molecules using 4 electrons from cytochrome c in the IMS and 4 protons from the mitochondrial matrix. In Macaca fascicularis (Crab-eating macaque), this protein is Cytochrome c oxidase subunit 7C, mitochondrial (COX7C).